The sequence spans 346 residues: Holliday junction branch migration complex subunit RuvB (346 aa).

The interval 1-183 (MTEQRIIASS…FGIVQRLEFY (183 aa)) is large ATPase domain (RuvB-L). ATP is bound by residues Ile22, Arg23, Gly64, Lys67, Thr68, Thr69, 130-132 (EDF), Arg173, Tyr183, and Arg220. A Mg(2+)-binding site is contributed by Thr68. The small ATPAse domain (RuvB-S) stretch occupies residues 184-254 (SPQELTRIVI…VAQAAMQMLK (71 aa)). Residues 257–346 (PEGFDELDRR…PGIGEPGDLF (90 aa)) are head domain (RuvB-H). Positions 293, 312, and 317 each coordinate DNA.

Belongs to the RuvB family. Homohexamer. Forms an RuvA(8)-RuvB(12)-Holliday junction (HJ) complex. HJ DNA is sandwiched between 2 RuvA tetramers; dsDNA enters through RuvA and exits via RuvB. An RuvB hexamer assembles on each DNA strand where it exits the tetramer. Each RuvB hexamer is contacted by two RuvA subunits (via domain III) on 2 adjacent RuvB subunits; this complex drives branch migration. In the full resolvosome a probable DNA-RuvA(4)-RuvB(12)-RuvC(2) complex forms which resolves the HJ.

The protein localises to the cytoplasm. It carries out the reaction ATP + H2O = ADP + phosphate + H(+). The RuvA-RuvB-RuvC complex processes Holliday junction (HJ) DNA during genetic recombination and DNA repair, while the RuvA-RuvB complex plays an important role in the rescue of blocked DNA replication forks via replication fork reversal (RFR). RuvA specifically binds to HJ cruciform DNA, conferring on it an open structure. The RuvB hexamer acts as an ATP-dependent pump, pulling dsDNA into and through the RuvAB complex. RuvB forms 2 homohexamers on either side of HJ DNA bound by 1 or 2 RuvA tetramers; 4 subunits per hexamer contact DNA at a time. Coordinated motions by a converter formed by DNA-disengaged RuvB subunits stimulates ATP hydrolysis and nucleotide exchange. Immobilization of the converter enables RuvB to convert the ATP-contained energy into a lever motion, pulling 2 nucleotides of DNA out of the RuvA tetramer per ATP hydrolyzed, thus driving DNA branch migration. The RuvB motors rotate together with the DNA substrate, which together with the progressing nucleotide cycle form the mechanistic basis for DNA recombination by continuous HJ branch migration. Branch migration allows RuvC to scan DNA until it finds its consensus sequence, where it cleaves and resolves cruciform DNA. The chain is Holliday junction branch migration complex subunit RuvB from Xanthomonas axonopodis pv. citri (strain 306).